The following is a 968-amino-acid chain: Glycine dehydrogenase (decarboxylating) (968 aa).

Residue lysine 717 is modified to N6-(pyridoxal phosphate)lysine.

This sequence belongs to the GcvP family. The glycine cleavage system is composed of four proteins: P, T, L and H. Requires pyridoxal 5'-phosphate as cofactor.

It catalyses the reaction N(6)-[(R)-lipoyl]-L-lysyl-[glycine-cleavage complex H protein] + glycine + H(+) = N(6)-[(R)-S(8)-aminomethyldihydrolipoyl]-L-lysyl-[glycine-cleavage complex H protein] + CO2. In terms of biological role, the glycine cleavage system catalyzes the degradation of glycine. The P protein binds the alpha-amino group of glycine through its pyridoxal phosphate cofactor; CO(2) is released and the remaining methylamine moiety is then transferred to the lipoamide cofactor of the H protein. The sequence is that of Glycine dehydrogenase (decarboxylating) from Tropheryma whipplei (strain TW08/27) (Whipple's bacillus).